Consider the following 443-residue polypeptide: Glutamate-1-semialdehyde 2,1-aminomutase (443 aa).

The residue at position 272 (Lys-272) is an N6-(pyridoxal phosphate)lysine.

Belongs to the class-III pyridoxal-phosphate-dependent aminotransferase family. HemL subfamily. Homodimer. Requires pyridoxal 5'-phosphate as cofactor.

Its subcellular location is the cytoplasm. The catalysed reaction is (S)-4-amino-5-oxopentanoate = 5-aminolevulinate. It functions in the pathway porphyrin-containing compound metabolism; protoporphyrin-IX biosynthesis; 5-aminolevulinate from L-glutamyl-tRNA(Glu): step 2/2. It participates in porphyrin-containing compound metabolism; chlorophyll biosynthesis. This chain is Glutamate-1-semialdehyde 2,1-aminomutase, found in Chloroflexus aurantiacus (strain ATCC 29366 / DSM 635 / J-10-fl).